The following is a 468-amino-acid chain: ATP synthase subunit beta (468 aa).

155 to 162 provides a ligand contact to ATP; sequence GGAGVGKT.

It belongs to the ATPase alpha/beta chains family. F-type ATPases have 2 components, CF(1) - the catalytic core - and CF(0) - the membrane proton channel. CF(1) has five subunits: alpha(3), beta(3), gamma(1), delta(1), epsilon(1). CF(0) has three main subunits: a(1), b(2) and c(9-12). The alpha and beta chains form an alternating ring which encloses part of the gamma chain. CF(1) is attached to CF(0) by a central stalk formed by the gamma and epsilon chains, while a peripheral stalk is formed by the delta and b chains.

The protein localises to the cell membrane. It carries out the reaction ATP + H2O + 4 H(+)(in) = ADP + phosphate + 5 H(+)(out). In terms of biological role, produces ATP from ADP in the presence of a proton gradient across the membrane. The catalytic sites are hosted primarily by the beta subunits. The chain is ATP synthase subunit beta from Streptococcus sanguinis (strain SK36).